Reading from the N-terminus, the 102-residue chain is Thioredoxin (102 aa).

A Thioredoxin domain is found at 1–102 (MVQIVSQDNF…SLVKLISKHQ (102 aa)). Cys28 and Cys31 form a disulfide bridge.

Belongs to the thioredoxin family.

Functionally, participates in various redox reactions through the reversible oxidation of its active center dithiol to a disulfide and catalyzes dithiol-disulfide exchange reactions. The protein is Thioredoxin (trxA) of Chlamydia muridarum (strain MoPn / Nigg).